Consider the following 256-residue polypeptide: L-erythrulose-1-phosphate isomerase (256 aa).

The Electrophile role is filled by His-96. The active-site Proton acceptor is the Glu-169. Substrate contacts are provided by Gly-175 and Ser-212.

It belongs to the triosephosphate isomerase family. As to quaternary structure, homodimer.

It localises to the cytoplasm. It carries out the reaction L-erythrulose 1-phosphate = D-erythrulose 4-phosphate. Its pathway is carbohydrate metabolism; erythritol degradation. In terms of biological role, catalyzes the isomerization of D-erythrulose-4P to L-erythrulose-1P. Involved in the degradation pathway of erythritol, that allows B.abortus to grow on this compound as the sole carbon source. The chain is L-erythrulose-1-phosphate isomerase from Brucella abortus (strain 2308).